A 222-amino-acid chain; its full sequence is S-crystallin SL20-1 (222 aa).

The region spanning 2-80 (PNYTLYYFNG…YLARENGYYG (79 aa)) is the GST N-terminal domain. In terms of domain architecture, GST C-terminal spans 82-222 (NNMDMFRIDY…YLKKRNNTNW (141 aa)).

Belongs to the GST superfamily. Lens.

In terms of biological role, S-crystallins are structural components of squids and octopi eye lens. Contains relatively little if any GST activity. The chain is S-crystallin SL20-1 from Nototodarus sloanii (Wellington flying squid).